We begin with the raw amino-acid sequence, 506 residues long: ATP synthase subunit alpha (506 aa).

Residue 171–178 coordinates ATP; the sequence is GDRQTGKT.

Belongs to the ATPase alpha/beta chains family. As to quaternary structure, F-type ATPases have 2 components, CF(1) - the catalytic core - and CF(0) - the membrane proton channel. CF(1) has five subunits: alpha(3), beta(3), gamma(1), delta(1), epsilon(1). CF(0) has four main subunits: a(1), b(1), b'(1) and c(9-12).

The protein localises to the cellular thylakoid membrane. It catalyses the reaction ATP + H2O + 4 H(+)(in) = ADP + phosphate + 5 H(+)(out). Functionally, produces ATP from ADP in the presence of a proton gradient across the membrane. The alpha chain is a regulatory subunit. This Trichormus variabilis (strain ATCC 29413 / PCC 7937) (Anabaena variabilis) protein is ATP synthase subunit alpha.